We begin with the raw amino-acid sequence, 413 residues long: Sensor protein SphS (413 aa).

Positions 176–398 (DVAHELKTPL…WLRVQLPQEP (223 aa)) constitute a Histidine kinase domain. Histidine 179 is modified (phosphohistidine; by autocatalysis).

It is found in the cytoplasm. It carries out the reaction ATP + protein L-histidine = ADP + protein N-phospho-L-histidine.. Its function is as follows. Member of the two-component regulatory system SphR/SphS. Sensory kinase. Is involved in inducible production of alkaline phosphatase in response to phosphate limitation as it is directly involved in the regulation of phoA transcription in response to phosphate limitation. SphS functions as a protein kinase that phosphorylates SphR. This chain is Sensor protein SphS (sphS), found in Synechococcus elongatus (strain ATCC 33912 / PCC 7942 / FACHB-805) (Anacystis nidulans R2).